We begin with the raw amino-acid sequence, 439 residues long: tRNA-2-methylthio-N(6)-dimethylallyladenosine synthase (439 aa).

Positions 1 to 117 constitute an MTTase N-terminal domain; the sequence is MKFYIRTFGC…IGNLVKRALN (117 aa). The [4Fe-4S] cluster site is built by C10, C46, C80, C153, C157, and C160. A Radical SAM core domain is found at 139–371; sequence PISKHHAWIT…MELQKRINLE (233 aa). The region spanning 369–436 is the TRAM domain; the sequence is NLEENEKYLE…PGPLYGEVVN (68 aa).

It belongs to the methylthiotransferase family. MiaB subfamily. As to quaternary structure, monomer. The cofactor is [4Fe-4S] cluster.

It localises to the cytoplasm. It carries out the reaction N(6)-dimethylallyladenosine(37) in tRNA + (sulfur carrier)-SH + AH2 + 2 S-adenosyl-L-methionine = 2-methylsulfanyl-N(6)-dimethylallyladenosine(37) in tRNA + (sulfur carrier)-H + 5'-deoxyadenosine + L-methionine + A + S-adenosyl-L-homocysteine + 2 H(+). Its function is as follows. Catalyzes the methylthiolation of N6-(dimethylallyl)adenosine (i(6)A), leading to the formation of 2-methylthio-N6-(dimethylallyl)adenosine (ms(2)i(6)A) at position 37 in tRNAs that read codons beginning with uridine. The chain is tRNA-2-methylthio-N(6)-dimethylallyladenosine synthase from Petrotoga mobilis (strain DSM 10674 / SJ95).